The chain runs to 366 residues: Septin-1 (366 aa).

The Septin-type G domain maps to 22–295 (KGFDFTLMVA…EGYRARCLQS (274 aa)). Residues 32 to 39 (GESGLGKS) form a G1 motif region. GTP contacts are provided by residues 32–39 (GESGLGKS), Thr66, Gly92, and 171–179 (KADALLPRE). The segment at 89–92 (DTPG) is G3 motif. A G4 motif region spans residues 170-173 (GKAD). Ser206 bears the Phosphoserine mark. Positions 229 and 244 each coordinate GTP. Residue Ser247 is modified to Phosphoserine; by AURKB. The residue at position 250 (Thr250) is a Phosphothreonine. A phosphoserine; by AURKB mark is found at Ser306 and Ser314. Residues 347–366 (EKMQAQMQQSQAQGEQSDVL) are disordered. A compositionally biased stretch (low complexity) spans 349 to 366 (MQAQMQQSQAQGEQSDVL).

It belongs to the TRAFAC class TrmE-Era-EngA-EngB-Septin-like GTPase superfamily. Septin GTPase family. Septins polymerize into heterooligomeric protein complexes that form filaments, and can associate with cellular membranes, actin filaments and microtubules. GTPase activity is required for filament formation. Interacts with AURKB.

The protein resides in the cytoplasm. It is found in the cytoskeleton. Its subcellular location is the microtubule organizing center. It localises to the centrosome. The protein localises to the midbody. In terms of biological role, filament-forming cytoskeletal GTPase. May play a role in cytokinesis (Potential). The protein is Septin-1 of Rattus norvegicus (Rat).